Consider the following 421-residue polypeptide: Methionine aminopeptidase 2 (421 aa).

Positions 1-53 (MTDAEIENSPASDLKELNLENEGVEQQDQAKADESDPVESKKKKNKKKKKKKS) are disordered. Residues 28–40 (DQAKADESDPVES) show a composition bias toward basic and acidic residues. Serine 35 is subject to Phosphoserine. Positions 41-53 (KKKKNKKKKKKKS) are enriched in basic residues. Histidine 174 provides a ligand contact to substrate. Residues aspartate 194, aspartate 205, and histidine 274 each coordinate a divalent metal cation. Histidine 282 contacts substrate. Residues glutamate 307 and glutamate 402 each coordinate a divalent metal cation.

It belongs to the peptidase M24A family. Methionine aminopeptidase eukaryotic type 2 subfamily. Requires Co(2+) as cofactor. Zn(2+) is required as a cofactor. The cofactor is Mn(2+). It depends on Fe(2+) as a cofactor.

The protein resides in the cytoplasm. It carries out the reaction Release of N-terminal amino acids, preferentially methionine, from peptides and arylamides.. Its function is as follows. Cotranslationally removes the N-terminal methionine from nascent proteins. The N-terminal methionine is often cleaved when the second residue in the primary sequence is small and uncharged (Met-Ala-, Cys, Gly, Pro, Ser, Thr, or Val). In Saccharomyces cerevisiae (strain RM11-1a) (Baker's yeast), this protein is Methionine aminopeptidase 2.